We begin with the raw amino-acid sequence, 177 residues long: Large ribosomal subunit protein uL6 (177 aa).

Belongs to the universal ribosomal protein uL6 family. As to quaternary structure, part of the 50S ribosomal subunit.

This protein binds to the 23S rRNA, and is important in its secondary structure. It is located near the subunit interface in the base of the L7/L12 stalk, and near the tRNA binding site of the peptidyltransferase center. The chain is Large ribosomal subunit protein uL6 from Verminephrobacter eiseniae (strain EF01-2).